Consider the following 247-residue polypeptide: MVQKFMSRYQAALLGLGLLLVFLLYMGLPGPPEQTSRLWRGPNVTVLTGLTRGNSRIFYREVLPIQQACRAEVVFLHGKAFNSHTWEQLGTLQLLSERGYRAVAIDLPGFGNSAPSEEVSTEAGRVELLERVFQDLQVQNTVLVSPSLSGSYALPFLMQNHHQLRGFVPIAPTYTRNYAQEQFRAVKTPTLILYGELDHTLARESLQQLRHLPNHSMVKLRDAGHACYLHKPEAFHLALLAFLDHLP.

The chain crosses the membrane as a helical; Signal-anchor for type II membrane protein span at residues 11 to 31 (AALLGLGLLLVFLLYMGLPGP). Residue Asn43 is glycosylated (N-linked (GlcNAc...) asparagine). Active-site charge relay system residues include Ser147, Asp198, and His225.

Belongs to the AB hydrolase superfamily. ABHD14 family. Widely expressed. Higher expression is detected in brain, kidney, heart, testis, ovary and uterus.

The protein localises to the cytoplasm. It is found in the membrane. Functionally, possible role in granule neuron development. The polypeptide is Protein ABHD14A (Mus musculus (Mouse)).